A 114-amino-acid polypeptide reads, in one-letter code: MGIFSVSRSTDAKKLEALLVEGERIESIYKLRVDQICFTNKRIIFFDNKMFSKKKVRVFLPYKTIESFAIQEAGMFDPDTGLLLMTRSKTFELEFAKDTDLSEVQAVLTKHLCS.

This is an uncharacterized protein from Bacillus subtilis (strain 168).